The sequence spans 262 residues: Urease accessory protein UreD (262 aa).

It belongs to the UreD family. UreD, UreF and UreG form a complex that acts as a GTP-hydrolysis-dependent molecular chaperone, activating the urease apoprotein by helping to assemble the nickel containing metallocenter of UreC. The UreE protein probably delivers the nickel.

Its subcellular location is the cytoplasm. In terms of biological role, required for maturation of urease via the functional incorporation of the urease nickel metallocenter. This Acetivibrio thermocellus (strain ATCC 27405 / DSM 1237 / JCM 9322 / NBRC 103400 / NCIMB 10682 / NRRL B-4536 / VPI 7372) (Clostridium thermocellum) protein is Urease accessory protein UreD.